A 227-amino-acid polypeptide reads, in one-letter code: MFS-type transporter FVEG_08288 (227 aa).

A helical membrane pass occupies residues 8-28 (VFLTVLIAIASCSVYILNIAI). A glycan (N-linked (GlcNAc...) asparagine) is linked at Asn40. The next 5 helical transmembrane spans lie at 43-63 (TVGL…MAGG), 100-120 (VANT…YYGV), 122-142 (FMVP…HFTL), 164-181 (FVRN…APWM), and 188-208 (YMMT…IWLI).

Belongs to the major facilitator superfamily.

It is found in the membrane. MFS-type transporter; part of the Fusarium detoxification of benzoxazolinone cluster 1 (FDB1) involved in the degradation of benzoxazolinones produced by the host plant. Maize, wheat, and rye produce the 2 benzoxazinone phytoanticipins 2,4-dihy-droxy-7-methoxy-1,4-benzoxazin-3-one (DIMBOA) and 2,4-dihydroxy-1,4-benzoxazin-3-one (DIBOA) that, due to their inherent instability once released, spontaneously degrade to the more stable corresponding benzoxazolinones, 6-methoxy-2-benzoxazolinone (MBOA) and 2-benzoxazolinone (BOA), respectively. In Gibberella moniliformis (strain M3125 / FGSC 7600) (Maize ear and stalk rot fungus), this protein is MFS-type transporter FVEG_08288.